A 766-amino-acid chain; its full sequence is Oligopeptide transporter 7 (766 aa).

The segment at 1-58 is disordered; sequence MEESEQVLPLLTNPKDLTNPSYASSSSSSSEPRDETEDLLLPISDENEEEEEENSPIR. Positions 45-54 are enriched in acidic residues; sequence DENEEEEEEN. 15 consecutive transmembrane segments (helical) span residues 79–99, 104–124, 154–174, 184–204, 247–267, 287–307, 324–344, 390–410, 446–466, 477–497, 509–529, 561–581, 627–647, 676–696, and 709–729; these read MWVLGTLSCILLSFLNQFFWY, LTISAISAQIAVVPLGRLMAA, ITIFANAGAGSVYAIHVVTVV, FFVSFIVIVTTQVLGFGWAGI, FVIAFVCSFAYYVFPGYLFQI, IGSGLHGLGVGAIGLDWSTIS, VGVGFVLVIYVLVPICYWLDV, LCTFFAISYGVGFAALSATIM, VPEWWFWCILVTNVGATIFAC, WWGVLLACTVAIIFTLPIGII, IITEYIIGYIYPGYPVANMCF, FMAQIVGTLISCFVYLTTAWW, LYKSVNWFFLVGAIAPILVWL, ATAVNYTTWVLAGFLSGFVVF, and VLSGALDAGLAFMGVLLYMCL.

It belongs to the oligopeptide OPT transporter (TC 2.A.67.1) family. Expressed in the major and the first-order veins and in the hydathodes of the leaves. In the roots, expressed in circular zones surrounding lateral root primordia and in some part of the root epidermis. Expressed also in the sepals and the cortical tissues of the stem, but not in the conducting bundles, the petals or the reproductive tissues.

Its subcellular location is the membrane. Its function is as follows. Involved in the translocation of tetra- and pentapeptides across the cellular membrane in an energy-dependent manner. May also transport cadmium complexes. This is Oligopeptide transporter 7 (OPT7) from Arabidopsis thaliana (Mouse-ear cress).